The sequence spans 443 residues: Tubulin beta-1 chain (443 aa).

8 residues coordinate GTP: Gln11, Glu69, Ser138, Gly142, Thr143, Gly144, Asn204, and Asn226. Glu69 serves as a coordination point for Mg(2+). The segment at 424-443 (QYQDATAEREGEYEEDYDEA) is disordered. The segment covering 434-443 (GEYEEDYDEA) has biased composition (acidic residues).

The protein belongs to the tubulin family. As to quaternary structure, dimer of alpha and beta chains. A typical microtubule is a hollow water-filled tube with an outer diameter of 25 nm and an inner diameter of 15 nM. Alpha-beta heterodimers associate head-to-tail to form protofilaments running lengthwise along the microtubule wall with the beta-tubulin subunit facing the microtubule plus end conferring a structural polarity. Microtubules usually have 13 protofilaments but different protofilament numbers can be found in some organisms and specialized cells. Mg(2+) serves as cofactor.

The protein localises to the cytoplasm. It localises to the cytoskeleton. Its function is as follows. Tubulin is the major constituent of microtubules, a cylinder consisting of laterally associated linear protofilaments composed of alpha- and beta-tubulin heterodimers. Microtubules grow by the addition of GTP-tubulin dimers to the microtubule end, where a stabilizing cap forms. Below the cap, tubulin dimers are in GDP-bound state, owing to GTPase activity of alpha-tubulin. The chain is Tubulin beta-1 chain (TUBB1) from Anemia phyllitidis (Fern).